The primary structure comprises 956 residues: MAM domain-containing glycosylphosphatidylinositol anchor protein 1 (956 aa).

A signal peptide spans 1 to 18; the sequence is MEVTCLLLLALIPFHCRG. Ig-like domains follow at residues 24–123 and 132–230; these read PAQA…KSIR and PVLT…KSIT. N-linked (GlcNAc...) asparagine glycosylation is present at Asn-42. Disulfide bonds link Cys-60/Cys-108 and Cys-157/Cys-214. N-linked (GlcNAc...) asparagine glycosylation is found at Asn-235, Asn-257, and Asn-307. Ig-like domains lie at 240–323, 338–432, 440–534, and 539–632; these read PTLK…KTVN, PDMI…VEVN, PTIS…VQLT, and PEVE…FQVS. Cystine bridges form between Cys-262–Cys-308, Cys-357–Cys-415, Cys-463–Cys-514, and Cys-560–Cys-616. The 101-residue stretch at 644–744 folds into the Fibronectin type-III domain; the sequence is TPNPTRSHKL…SRVIHYTEPI (101 aa). Positions 752–919 constitute an MAM domain; sequence NTCHFEDEKI…VTLKKGECPR (168 aa). Positions 780–789 are enriched in polar residues; that stretch reads LTQNPKRSPN. The tract at residues 780 to 799 is disordered; that stretch reads LTQNPKRSPNTGPPTDISGT. Residue Ser-933 is the site of GPI-anchor amidated serine attachment. Positions 934 to 956 are cleaved as a propeptide — removed in mature form; sequence GAPRLSSLQLWGSMTIFLLALQR.

In terms of assembly, interacts heterophilically through its MAM domain with proteins in axon-rich regions and through its Ig-like domains with proteins in differentiating muscle. Interacts (through the Ig-like domains) with NLGN2. As to expression, high levels detected in developing central and peripheral nervous systems with little expression elsewhere. In brain, highest levels in cerebral cortex and hindbrain at E15. At postnatal day 1, highest levels in basilar pons and superficial layers of the neocortex. In the developing spinal cord, restricted to a subpopulation of neurons in the dorsal and spinal ventral cord, probably D1 interneurons. Expressed in brain.

The protein resides in the cell membrane. Its function is as follows. Required for radial migration of cortical neurons in the superficial layer of the neocortex. Plays a role in the formation or maintenance of inhibitory synapses. May function by inhibiting the activity of NLGN2. The protein is MAM domain-containing glycosylphosphatidylinositol anchor protein 1 (Mdga1) of Rattus norvegicus (Rat).